Consider the following 426-residue polypeptide: Glutamate-1-semialdehyde 2,1-aminomutase (426 aa).

Position 265 is an N6-(pyridoxal phosphate)lysine (lysine 265).

Belongs to the class-III pyridoxal-phosphate-dependent aminotransferase family. HemL subfamily. In terms of assembly, homodimer. Pyridoxal 5'-phosphate is required as a cofactor.

It is found in the cytoplasm. It catalyses the reaction (S)-4-amino-5-oxopentanoate = 5-aminolevulinate. The protein operates within porphyrin-containing compound metabolism; protoporphyrin-IX biosynthesis; 5-aminolevulinate from L-glutamyl-tRNA(Glu): step 2/2. The chain is Glutamate-1-semialdehyde 2,1-aminomutase from Pectobacterium carotovorum subsp. carotovorum (strain PC1).